A 913-amino-acid chain; its full sequence is Clumping factor B (913 aa).

The first 44 residues, methionine 1–alanine 44, serve as a signal peptide directing secretion. Residues tyrosine 15 to serine 26 carry the YSIRK-G/S signaling motif motif. Composition is skewed to polar residues over residues alanine 44–alanine 61 and methionine 68–serine 95. Residues alanine 44–threonine 192 form a disordered region. The interval serine 45–asparagine 542 is ligand binding A region. The segment covering threonine 96–proline 119 has biased composition (low complexity). Residues glutamine 120–serine 189 are compositionally biased toward polar residues. An MIDAS-like motif motif is present at residues aspartate 272 to serine 276. Residues tyrosine 530–asparagine 885 form a disordered region. Residues aspartate 545–glutamate 555 are compositionally biased toward pro residues. Acidic residues predominate over residues proline 556–aspartate 837. Over residues arginine 841–proline 852 the composition is skewed to polar residues. Over residues histidine 869–glutamate 882 the composition is skewed to basic and acidic residues. Positions leucine 874 to glycine 878 match the LPXTG sorting signal motif. At threonine 877 the chain carries Pentaglycyl murein peptidoglycan amidated threonine. Residues glycine 878–alanine 913 constitute a propeptide, removed by sortase.

The protein belongs to the serine-aspartate repeat-containing protein (SDr) family. Proteolytically cleaved by aureolysin (aur). This cleavage leads to the inactivation of ClfB.

It is found in the secreted. The protein localises to the cell wall. Cell surface-associated protein implicated in virulence by promoting bacterial attachment to both alpha- and beta-chains of human fibrinogen and inducing the formation of bacterial clumps. In Staphylococcus aureus (strain COL), this protein is Clumping factor B (clfB).